Reading from the N-terminus, the 282-residue chain is Phosphatidylserine decarboxylase proenzyme (282 aa).

Active-site charge relay system; for autoendoproteolytic cleavage activity residues include Asp-88, His-144, and Ser-247. Ser-247 functions as the Schiff-base intermediate with substrate; via pyruvic acid; for decarboxylase activity in the catalytic mechanism. Residue Ser-247 is modified to Pyruvic acid (Ser); by autocatalysis.

It belongs to the phosphatidylserine decarboxylase family. PSD-B subfamily. Prokaryotic type I sub-subfamily. In terms of assembly, heterodimer of a large membrane-associated beta subunit and a small pyruvoyl-containing alpha subunit. Pyruvate serves as cofactor. Is synthesized initially as an inactive proenzyme. Formation of the active enzyme involves a self-maturation process in which the active site pyruvoyl group is generated from an internal serine residue via an autocatalytic post-translational modification. Two non-identical subunits are generated from the proenzyme in this reaction, and the pyruvate is formed at the N-terminus of the alpha chain, which is derived from the carboxyl end of the proenzyme. The autoendoproteolytic cleavage occurs by a canonical serine protease mechanism, in which the side chain hydroxyl group of the serine supplies its oxygen atom to form the C-terminus of the beta chain, while the remainder of the serine residue undergoes an oxidative deamination to produce ammonia and the pyruvoyl prosthetic group on the alpha chain. During this reaction, the Ser that is part of the protease active site of the proenzyme becomes the pyruvoyl prosthetic group, which constitutes an essential element of the active site of the mature decarboxylase.

The protein resides in the cell membrane. It carries out the reaction a 1,2-diacyl-sn-glycero-3-phospho-L-serine + H(+) = a 1,2-diacyl-sn-glycero-3-phosphoethanolamine + CO2. The protein operates within phospholipid metabolism; phosphatidylethanolamine biosynthesis; phosphatidylethanolamine from CDP-diacylglycerol: step 2/2. Catalyzes the formation of phosphatidylethanolamine (PtdEtn) from phosphatidylserine (PtdSer). This Xanthomonas oryzae pv. oryzae (strain MAFF 311018) protein is Phosphatidylserine decarboxylase proenzyme.